The sequence spans 502 residues: Lysine--tRNA ligase (502 aa).

Mg(2+) is bound by residues glutamate 413 and glutamate 420.

This sequence belongs to the class-II aminoacyl-tRNA synthetase family. In terms of assembly, homodimer. Mg(2+) serves as cofactor.

The protein resides in the cytoplasm. The enzyme catalyses tRNA(Lys) + L-lysine + ATP = L-lysyl-tRNA(Lys) + AMP + diphosphate. This chain is Lysine--tRNA ligase (lysS), found in Haemophilus influenzae (strain ATCC 51907 / DSM 11121 / KW20 / Rd).